The primary structure comprises 257 residues: MNVKLVSYTRDGEKVVAIASKMSRSRKGWDYHEKTMTDEEIEVWIRDAILHGYWSVLEHSIYTFSIEGISRVASHQLVRHRVASYTQMSHRFAKPIDEYYKPITPPSIEKRAKEIIEKAYQEAYENYFKLLQDGVPEEDARYVLPNGVNTNIVVTMNARELYNFFALRLCSRAQWEIRAIAWKMLEEVKKVHPRLFRYVGPNCIIHENFIRNEPITLDEVLQKDNIEFISQRCIEGVMRDGILKCIRNSKHVLEYLK.

A ThyX domain is found at 1-202 (MNVKLVSYTR…PRLFRYVGPN (202 aa)). FAD-binding positions include Ser55, 79–81 (RHR), and Gln87. DUMP is bound by residues 76–79 (QLVR), 87–91 (QMSHR), and Arg141. Residues 79 to 89 (RHRVASYTQMS) carry the ThyX motif motif. FAD-binding positions include 157–159 (NAR) and Asn163. A dUMP-binding site is contributed by Arg168. The active-site Involved in ionization of N3 of dUMP, leading to its activation is the Arg168.

Belongs to the thymidylate synthase ThyX family. Homotetramer. The cofactor is FAD.

It catalyses the reaction dUMP + (6R)-5,10-methylene-5,6,7,8-tetrahydrofolate + NADPH + H(+) = dTMP + (6S)-5,6,7,8-tetrahydrofolate + NADP(+). It participates in pyrimidine metabolism; dTTP biosynthesis. In terms of biological role, catalyzes the reductive methylation of 2'-deoxyuridine-5'-monophosphate (dUMP) to 2'-deoxythymidine-5'-monophosphate (dTMP) while utilizing 5,10-methylenetetrahydrofolate (mTHF) as the methyl donor, and NADPH and FADH(2) as the reductant. The polypeptide is Flavin-dependent thymidylate synthase (Sulfurisphaera tokodaii (strain DSM 16993 / JCM 10545 / NBRC 100140 / 7) (Sulfolobus tokodaii)).